A 464-amino-acid chain; its full sequence is Fumarate hydratase class II (464 aa).

Residues 98–100 (SGT), 129–132 (HPND), 139–141 (SSN), and T187 each bind substrate. The active-site Proton donor/acceptor is H188. The active site involves S318. Residues S319 and 324 to 326 (KVN) each bind substrate.

It belongs to the class-II fumarase/aspartase family. Fumarase subfamily. As to quaternary structure, homotetramer.

The protein localises to the cytoplasm. It catalyses the reaction (S)-malate = fumarate + H2O. The protein operates within carbohydrate metabolism; tricarboxylic acid cycle; (S)-malate from fumarate: step 1/1. Functionally, involved in the TCA cycle. Catalyzes the stereospecific interconversion of fumarate to L-malate. The polypeptide is Fumarate hydratase class II (Wigglesworthia glossinidia brevipalpis).